Reading from the N-terminus, the 1362-residue chain is DNA-directed RNA polymerase subunit beta (1362 aa).

The protein belongs to the RNA polymerase beta chain family. In terms of assembly, the RNAP catalytic core consists of 2 alpha, 1 beta, 1 beta' and 1 omega subunit. When a sigma factor is associated with the core the holoenzyme is formed, which can initiate transcription.

It catalyses the reaction RNA(n) + a ribonucleoside 5'-triphosphate = RNA(n+1) + diphosphate. Its function is as follows. DNA-dependent RNA polymerase catalyzes the transcription of DNA into RNA using the four ribonucleoside triphosphates as substrates. This is DNA-directed RNA polymerase subunit beta from Parvibaculum lavamentivorans (strain DS-1 / DSM 13023 / NCIMB 13966).